A 394-amino-acid polypeptide reads, in one-letter code: Phosphoglycerate kinase (394 aa).

Substrate contacts are provided by residues 21-23 (DFN), R36, 59-62 (HLGR), R118, and R151. At S183 the chain carries Phosphoserine. Positions 201 and 292 each coordinate ATP. T299 is modified (phosphothreonine). Residues E323 and 350–353 (GGDS) contribute to the ATP site.

The protein belongs to the phosphoglycerate kinase family. Monomer.

The protein localises to the cytoplasm. It catalyses the reaction (2R)-3-phosphoglycerate + ATP = (2R)-3-phospho-glyceroyl phosphate + ADP. It functions in the pathway carbohydrate degradation; glycolysis; pyruvate from D-glyceraldehyde 3-phosphate: step 2/5. The sequence is that of Phosphoglycerate kinase (pgk) from Priestia megaterium (strain DSM 319 / IMG 1521) (Bacillus megaterium).